Consider the following 1513-residue polypeptide: Mucin-2 (1513 aa).

The signal sequence occupies residues 1–20 (MGLPLARLVAVCLVLALAKG). The 173-residue stretch at 32-204 (HVCSTWGDFH…KINKPEVVCE (173 aa)) folds into the VWFD 1 domain. Cystine bridges form between Cys-34-Cys-166, Cys-56-Cys-203, Cys-64-Cys-163, Cys-215-Cys-252, Cys-222-Cys-247, Cys-234-Cys-272, Cys-254-Cys-260, Cys-262-Cys-288, Cys-292-Cys-326, Cys-309-Cys-348, Cys-328-Cys-342, Cys-350-Cys-372, Cys-367-Cys-384, Cys-370-Cys-379, Cys-388-Cys-525, Cys-410-Cys-560, Cys-432-Cys-440, Cys-571-Cys-616, Cys-585-Cys-611, Cys-598-Cys-636, Cys-618-Cys-624, Cys-626-Cys-651, Cys-658-Cys-695, Cys-671-Cys-685, Cys-675-Cys-715, Cys-697-Cys-709, Cys-717-Cys-739, and Cys-737-Cys-746. Asp-46 lines the Ca(2+) pocket. Cu(+) is bound by residues Met-143 and Met-151. Glu-153 is a Cu(2+) binding site. Asn-160 is a glycosylation site (N-linked (GlcNAc...) asparagine). Ca(2+) is bound by residues Asp-168, Asn-170, and Glu-177. 2 residues coordinate Cu(2+): His-274 and His-321. Residues 292-348 (CPGNMVYLESGSPWLDTCSHLEVSSLCEEHYMDGCFCPEGTVYDDITGSGCIPVSQC) form the TIL domain. Met-323 is a Cu(+) binding site. The VWFC domain maps to 350–410 (CKLHGHLYMP…GKKFTFHGDC (61 aa)). Residues 386–561 (ETCALEGGSH…NTWKAQSSCH (176 aa)) form the VWFD 2 domain. Asp-400 contributes to the Ca(2+) binding site. N-linked (GlcNAc...) asparagine glycosylation is present at Asn-420. Ca(2+) contacts are provided by Asn-527, Asn-529, Leu-531, Asp-534, and Asp-535. Asn-667 is a glycosylation site (N-linked (GlcNAc...) asparagine). N-linked (GlcNAc...) asparagine glycosylation occurs at Asn-767. 21 disulfides stabilise this stretch: Cys-781-Cys-817, Cys-799-Cys-811, Cys-819-Cys-842, Cys-836-Cys-854, Cys-840-Cys-849, Cys-858-Cys-989, Cys-880-Cys-1024, Cys-889-Cys-986, Cys-906-Cys-913, Cys-1034-Cys-1077, Cys-1048-Cys-1072, Cys-1059-Cys-1099, Cys-1079-Cys-1087, Cys-1089-Cys-1114, Cys-1105-Cys-1134, Cys-1118-Cys-1160, Cys-1142-Cys-1184, Cys-1164-Cys-1178, Cys-1186-Cys-1210, Cys-1205-Cys-1235, and Cys-1208-Cys-1218. An N-linked (GlcNAc...) asparagine glycan is attached at Asn-837. The VWFD 3 domain occupies 856 to 1025 (STCSIYGSGH…NSWKEASTCP (170 aa)). Asp-870 is a Ca(2+) binding site. N-linked (GlcNAc...) asparagine glycosylation is present at Asn-892. The Ca(2+) site is built by Asn-991, Asp-993, Asn-998, and Asp-999. 2 N-linked (GlcNAc...) asparagine glycosylation sites follow: Asn-1136 and Asn-1151. N-linked (GlcNAc...) asparagine glycosylation is found at Asn-1212, Asn-1227, and Asn-1243. O-linked (GalNAc) threonine glycosylation is found at Thr-1264, Thr-1267, Thr-1268, and Thr-1280. An O-linked (GalNAc) serine glycan is attached at Ser-1286. Thr-1290 is a glycosylation site (O-linked (GalNAc) threonine). 6 residues coordinate Ca(2+): Asn-1303, His-1306, Ser-1309, Gly-1313, Asp-1314, and Glu-1316. Asn-1350 is a glycosylation site (N-linked (GlcNAc...) asparagine). Residues Asp-1373 and Tyr-1374 each coordinate Ca(2+). 11 consecutive repeat copies span residues 1392 to 1407 (SPTTSTPISSTPQPTS), 1408 to 1423 (SPTTLPTTSPLTSSAT), 1424 to 1434 (SPTTSHITSTV), 1435 to 1445 (SPTTSPTTSTT), 1446 to 1456 (SPTTSPTTSTT), 1457 to 1467 (SPTTSTTSPTP), 1468 to 1478 (SPTTSTTSPTP), 1479 to 1489 (SPTTSTTSPTP), 1490 to 1500 (SPTTSTTSPTT), 1501 to 1511 (SPITSPTTSTT), and 1512 to 1513 (SP). The segment at 1392 to 1513 (SPTTSTPISS…TSPTTSTTSP (122 aa)) is approximate repeats. The disordered stretch occupies residues 1392–1513 (SPTTSTPISS…TSPTTSTTSP (122 aa)).

Homomultimer; disulfide-linked. The N- and C-terminus mediate their assembly into higher order structures to form filaments. The CTCK domains of two polypeptides associate in the endoplasmic reticulum to generate intermolecularly disulfide-bonded dimers. These dimers progress to the Golgi apparatus, which is a more acidic environment than the endoplasmic reticulum. Under acidic conditions, the N-termini form non-covalent intermolecular interactions that juxtapose assemblies of the third VWD domain (VWD3) from different CTCK-linked dimers. The VWD3 assemblies then become disulfide bonded to one another to produce long, disulfide-linked polymers that remain highly compact until secretion. Interacts with FCGBP. Interacts with AGR2; disulfide-linked. Post-translationally, O-glycosylated. O-glycosylation is required for mucin assembly. Goblet cells synthesize two forms of mucin that differ in branched chain O-glycosylation and the site of production in the colon. May undergo proteolytic cleavage in the outer mucus layer of the colon, contributing to the expanded volume and loose nature of this layer which allows for bacterial colonization in contrast to the inner mucus layer which is dense and devoid of bacteria. In terms of processing, at low pH of 6 and under, undergoes autocatalytic cleavage in vitro in the N-terminal region of the fourth VWD domain. It is likely that this also occurs in vivo and is triggered by the low pH of the late secretory pathway. In terms of tissue distribution, expressed in intestine and airway.

Its subcellular location is the secreted. Coats the epithelia of the intestines and other mucus membrane-containing organs to provide a protective, lubricating barrier against particles and infectious agents at mucosal surfaces. Major constituent of the colon mucus, which is mainly formed by large polymeric networks of MUC2 secreted by goblet cells that cover the exposed surfaces of intestine. MUC2 networks form hydrogels that guard the underlying epithelium from pathogens and other hazardous matter entering from the outside world, while permitting nutrient absorption and gas exchange. Acts as a divalent copper chaperone that protects intestinal cells from copper toxicity and facilitates nutritional copper unptake into cells. Binds both Cu(2+) and its reduced form, Cu(1+), at two juxtaposed binding sites: Cu(2+), once reduced to Cu(1+) by vitamin C (ascorbate) or other dietary antioxidants, transits to the other binding site. MUC2-bound Cu(1+) is protected from oxidation in aerobic environments, and can be released for nutritional delivery to cells. Mucin gels store antimicrobial molecules that participate in innate immunity. Mucin glycoproteins also house and feed the microbiome, lubricate tissue surfaces, and may facilitate the removal of contaminants and waste products from the body. Goblet cells synthesize two forms of MUC2 mucin that differ in branched chain O-glycosylation and the site of production in the colon: a (1) 'thick' mucus that wraps the microbiota to form fecal pellets is produced in the proximal, ascending colon. 'Thick' mucus transits along the descending colon and is lubricated by a (2) 'thin' MUC2 mucus produced in the distal colon which adheres to the 'thick' mucus. This Rattus norvegicus (Rat) protein is Mucin-2.